An 808-amino-acid polypeptide reads, in one-letter code: Spindle assembly abnormal protein 4 (808 aa).

Residues 1-151 (MASDENIGAD…PDEPSTLVNS (151 aa)) form a disordered region. A compositionally biased stretch (low complexity) spans 42 to 54 (PPTSELSSASSPS). 2 stretches are compositionally biased toward polar residues: residues 61–78 (SLSN…SGIS) and 85–104 (PPTT…SPEN). Residues 113-123 (AEEHGHSGQHA) are compositionally biased toward basic and acidic residues. Over residues 124–133 (EEEEDNDTDE) the composition is skewed to acidic residues. A coiled-coil region spans residues 161 to 181 (KYKNAAAEFKAFERRMDSMRS). Disordered stretches follow at residues 187–206 (TSLA…PPTR) and 271–298 (VTAP…DENR). The segment covering 280–294 (MMNSSRQNPQNGNVQ) has biased composition (polar residues). Residues 314-503 (LDRQKLEIEI…ERDDKEKEMF (190 aa)) adopt a coiled-coil conformation. Positions 511–529 (KTSNPVPPVLNQSVPISIT) are enriched in polar residues. The interval 511-564 (KTSNPVPPVLNQSVPISITSNGPSRHPSSSSLTTFRKPSTSNRERGVSWADEPN) is disordered. The segment covering 530–541 (SNGPSRHPSSSS) has biased composition (low complexity). Polar residues predominate over residues 542–551 (LTTFRKPSTS).

As to quaternary structure, interacts with hyls-1; leading to hyls-1 localization into newly forming centrioles.

Its subcellular location is the cytoplasm. It is found in the cytoskeleton. The protein localises to the microtubule organizing center. It localises to the centrosome. Functionally, required for centrosome duplication. Plays a central role in determining centrosome size. The sequence is that of Spindle assembly abnormal protein 4 (sas-4) from Caenorhabditis elegans.